Here is a 396-residue protein sequence, read N- to C-terminus: Elongation factor Tu 2 (396 aa).

Residues 10–206 form the tr-type G domain; it reads KPHINVGTIG…VLDSYIPEPQ (197 aa). The interval 19-26 is G1; it reads GHVDHGKT. 19 to 26 lines the GTP pocket; it reads GHVDHGKT. Residue Thr26 coordinates Mg(2+). The G2 stretch occupies residues 60–64; the sequence is GITIN. The tract at residues 81-84 is G3; sequence DCPG. GTP contacts are provided by residues 81–85 and 136–139; these read DCPGH and NKAD. Positions 136–139 are G4; that stretch reads NKAD. The G5 stretch occupies residues 174–176; it reads SAL.

This sequence belongs to the TRAFAC class translation factor GTPase superfamily. Classic translation factor GTPase family. EF-Tu/EF-1A subfamily. Monomer.

The protein resides in the cytoplasm. It catalyses the reaction GTP + H2O = GDP + phosphate + H(+). GTP hydrolase that promotes the GTP-dependent binding of aminoacyl-tRNA to the A-site of ribosomes during protein biosynthesis. This chain is Elongation factor Tu 2, found in Nitrosomonas eutropha (strain DSM 101675 / C91 / Nm57).